A 346-amino-acid chain; its full sequence is uncharacterized protein (346 aa).

8 consecutive transmembrane segments (helical) span residues 15–35 (YLRG…LLTV), 55–75 (VEAR…YLFI), 93–113 (ILVL…EALT), 139–159 (ILLL…PLIL), 182–202 (IFTF…YCYV), 229–249 (LGVA…LLLL), 269–289 (LTNY…FHLF), and 295–315 (LQSL…SAMW).

This sequence to E.coli YeiB, B.subtilis YxaH and B.subtilis YrkO.

The protein localises to the cell membrane. In terms of biological role, involved in transport. This is an uncharacterized protein from Bacillus acidopullulyticus.